The sequence spans 57 residues: Small ribosomal subunit protein eS27 (57 aa).

Cys10, Cys13, Cys29, and Cys32 together coordinate Zn(2+). The segment at 10–32 (CDDCENEQVLFGKAANTVNCAVC) adopts a C4-type zinc-finger fold.

The protein belongs to the eukaryotic ribosomal protein eS27 family. In terms of assembly, part of the 30S ribosomal subunit. Zn(2+) serves as cofactor.

In Natronomonas pharaonis (strain ATCC 35678 / DSM 2160 / CIP 103997 / JCM 8858 / NBRC 14720 / NCIMB 2260 / Gabara) (Halobacterium pharaonis), this protein is Small ribosomal subunit protein eS27.